The following is a 443-amino-acid chain: 3-phosphoshikimate 1-carboxyvinyltransferase (443 aa).

Positions 24, 25, and 29 each coordinate 3-phosphoshikimate. Phosphoenolpyruvate is bound at residue K24. G95 and R123 together coordinate phosphoenolpyruvate. Residues S167, Q169, D323, and K350 each contribute to the 3-phosphoshikimate site. Q169 lines the phosphoenolpyruvate pocket. The Proton acceptor role is filled by D323. Positions 354 and 398 each coordinate phosphoenolpyruvate.

This sequence belongs to the EPSP synthase family. Monomer.

It is found in the cytoplasm. The enzyme catalyses 3-phosphoshikimate + phosphoenolpyruvate = 5-O-(1-carboxyvinyl)-3-phosphoshikimate + phosphate. Its pathway is metabolic intermediate biosynthesis; chorismate biosynthesis; chorismate from D-erythrose 4-phosphate and phosphoenolpyruvate: step 6/7. In terms of biological role, catalyzes the transfer of the enolpyruvyl moiety of phosphoenolpyruvate (PEP) to the 5-hydroxyl of shikimate-3-phosphate (S3P) to produce enolpyruvyl shikimate-3-phosphate and inorganic phosphate. The chain is 3-phosphoshikimate 1-carboxyvinyltransferase from Caulobacter vibrioides (strain ATCC 19089 / CIP 103742 / CB 15) (Caulobacter crescentus).